Consider the following 151-residue polypeptide: uncharacterized protein (151 aa).

Transmembrane regions (helical) follow at residues 22-42 (IVSI…GFFF), 62-82 (ALFI…TKII), 97-117 (LFAF…ADYF), and 121-141 (IYIP…IELA).

Its subcellular location is the cell membrane. This is an uncharacterized protein from Bacillus subtilis (strain 168).